We begin with the raw amino-acid sequence, 92 residues long: RIIa domain-containing protein 1 (92 aa).

Residues 43 to 77 (KEVEWLISGFFREIFLKRPDNILEFAADYFTDPRL) enclose the RIIa domain.

This Homo sapiens (Human) protein is RIIa domain-containing protein 1 (RIIAD1).